The sequence spans 430 residues: Adenylosuccinate synthetase (430 aa).

Residues Gly12–Lys18 and Gly40–Thr42 contribute to the GTP site. Asp13 serves as the catalytic Proton acceptor. Mg(2+) contacts are provided by Asp13 and Gly40. Residues Asp13–Lys16, Asn38–His41, Thr130, Arg144, Gln224, Thr239, and Arg303 contribute to the IMP site. Residue His41 is the Proton donor of the active site. Thr299–Arg305 contributes to the substrate binding site. Residues Arg305, Lys331 to Asp333, and Ser413 to Ser415 contribute to the GTP site.

It belongs to the adenylosuccinate synthetase family. Homodimer. It depends on Mg(2+) as a cofactor.

It is found in the cytoplasm. It carries out the reaction IMP + L-aspartate + GTP = N(6)-(1,2-dicarboxyethyl)-AMP + GDP + phosphate + 2 H(+). It participates in purine metabolism; AMP biosynthesis via de novo pathway; AMP from IMP: step 1/2. Its function is as follows. Plays an important role in the de novo pathway of purine nucleotide biosynthesis. Catalyzes the first committed step in the biosynthesis of AMP from IMP. The protein is Adenylosuccinate synthetase of Paracoccus denitrificans (strain Pd 1222).